A 372-amino-acid polypeptide reads, in one-letter code: tRNA-specific 2-thiouridylase MnmA (372 aa).

ATP-binding positions include G11–S18 and M36. The interaction with target base in tRNA stretch occupies residues N106–D108. C111 (nucleophile) is an active-site residue. The cysteines at positions 111 and 204 are disulfide-linked. G136 contributes to the ATP binding site. Positions K154 to Q156 are interaction with tRNA. C204 acts as the Cysteine persulfide intermediate in catalysis. Positions R311–Y312 are interaction with tRNA.

It belongs to the MnmA/TRMU family.

It is found in the cytoplasm. The enzyme catalyses S-sulfanyl-L-cysteinyl-[protein] + uridine(34) in tRNA + AH2 + ATP = 2-thiouridine(34) in tRNA + L-cysteinyl-[protein] + A + AMP + diphosphate + H(+). Functionally, catalyzes the 2-thiolation of uridine at the wobble position (U34) of tRNA, leading to the formation of s(2)U34. This Mycoplasmopsis synoviae (strain 53) (Mycoplasma synoviae) protein is tRNA-specific 2-thiouridylase MnmA.